Here is a 478-residue protein sequence, read N- to C-terminus: Ninja-family protein 7 (478 aa).

Disordered stretches follow at residues 1–247 (MDDD…LTPG), 336–374 (SFTA…EKKA), and 454–478 (DAPA…SAEN). Positions 23-35 (KARDAPLEPKAEP) are enriched in basic and acidic residues. Polar residues predominate over residues 169–179 (ISISTDDGSTG). Residues 180 to 189 (ENEDVAESEA) show a composition bias toward acidic residues. The span at 233-242 (SFSGSESSSG) shows a compositional bias: low complexity. Positions 339-359 (AKDKADQTGTKQVDDGKKPRE) are enriched in basic and acidic residues.

The protein belongs to the Ninja family.

It is found in the nucleus. This is Ninja-family protein 7 from Zea mays (Maize).